The chain runs to 64 residues: Potassium channel toxin alpha-KTx J123 (64 aa).

A signal peptide spans 1–21 (MNKVYLVAVLVLFLALTINES). 3 disulfide bridges follow: cysteine 30–cysteine 52, cysteine 37–cysteine 60, and cysteine 41–cysteine 62.

This sequence belongs to the short scorpion toxin superfamily. Potassium channel inhibitor family. Alpha-KTx 11 subfamily. In terms of tissue distribution, expressed by the venom gland.

The protein localises to the secreted. Its function is as follows. This recombinant toxin inhibits mammalian voltage-gated potassium channels Kv1.3/KCNA3 (IC(50)=0.79 nM) and Kv1.2/KCNA2 (IC(50)=26.4 nM). The protein is Potassium channel toxin alpha-KTx J123 of Olivierus martensii (Manchurian scorpion).